Consider the following 164-residue polypeptide: Protein SprT (164 aa).

The SprT-like domain maps to 12–157; the sequence is CFLQAESFFK…CRRCRQTLVF (146 aa). Histidine 69 lines the Zn(2+) pocket. Glutamate 70 is a catalytic residue. Histidine 73 is a binding site for Zn(2+).

This sequence belongs to the SprT family. Zn(2+) is required as a cofactor.

The protein localises to the cytoplasm. This chain is Protein SprT, found in Pseudomonas fluorescens (strain SBW25).